Here is a 312-residue protein sequence, read N- to C-terminus: ADP-L-glycero-D-manno-heptose-6-epimerase (312 aa).

NADP(+) contacts are provided by residues 10–11, 31–32, K38, K53, 75–79, and N92; these read FI, DN, and EGACS. Y140 acts as the Proton acceptor in catalysis. K144 lines the NADP(+) pocket. Position 169 (N169) interacts with substrate. NADP(+)-binding residues include V170 and K178. K178 acts as the Proton acceptor in catalysis. Residues S180, H187, 201–204, R209, and Y274 each bind substrate; that span reads FEGS.

This sequence belongs to the NAD(P)-dependent epimerase/dehydratase family. HldD subfamily. Homopentamer. Requires NADP(+) as cofactor.

It catalyses the reaction ADP-D-glycero-beta-D-manno-heptose = ADP-L-glycero-beta-D-manno-heptose. It functions in the pathway nucleotide-sugar biosynthesis; ADP-L-glycero-beta-D-manno-heptose biosynthesis; ADP-L-glycero-beta-D-manno-heptose from D-glycero-beta-D-manno-heptose 7-phosphate: step 4/4. Catalyzes the interconversion between ADP-D-glycero-beta-D-manno-heptose and ADP-L-glycero-beta-D-manno-heptose via an epimerization at carbon 6 of the heptose. This chain is ADP-L-glycero-D-manno-heptose-6-epimerase, found in Proteus mirabilis (strain HI4320).